Consider the following 842-residue polypeptide: Protein translocase subunit SecA (842 aa).

Residues Q85, 103-107 (GEGKT), and D493 each bind ATP. 4 residues coordinate Zn(2+): C825, C827, C836, and H837.

Belongs to the SecA family. As to quaternary structure, monomer and homodimer. Part of the essential Sec protein translocation apparatus which comprises SecA, SecYEG and auxiliary proteins SecDF. Other proteins may also be involved. The cofactor is Zn(2+).

It is found in the cell membrane. The protein localises to the cytoplasm. The catalysed reaction is ATP + H2O + cellular proteinSide 1 = ADP + phosphate + cellular proteinSide 2.. Its function is as follows. Part of the Sec protein translocase complex. Interacts with the SecYEG preprotein conducting channel. Has a central role in coupling the hydrolysis of ATP to the transfer of proteins into and across the cell membrane, serving as an ATP-driven molecular motor driving the stepwise translocation of polypeptide chains across the membrane. The sequence is that of Protein translocase subunit SecA from Streptococcus uberis (strain ATCC BAA-854 / 0140J).